The primary structure comprises 443 residues: Phosphoglucosamine mutase (443 aa).

The Phosphoserine intermediate role is filled by serine 101. Residues serine 101, aspartate 239, aspartate 241, and aspartate 243 each coordinate Mg(2+). Serine 101 carries the post-translational modification Phosphoserine.

It belongs to the phosphohexose mutase family. The cofactor is Mg(2+). In terms of processing, activated by phosphorylation.

The enzyme catalyses alpha-D-glucosamine 1-phosphate = D-glucosamine 6-phosphate. Catalyzes the conversion of glucosamine-6-phosphate to glucosamine-1-phosphate. This is Phosphoglucosamine mutase from Francisella tularensis subsp. tularensis (strain FSC 198).